The following is a 284-amino-acid chain: Nucleotide-binding protein NMC0691 (284 aa).

Residue 8–15 (GLSGSGKS) participates in ATP binding. A GTP-binding site is contributed by 58-61 (DVRS).

Belongs to the RapZ-like family.

Functionally, displays ATPase and GTPase activities. The sequence is that of Nucleotide-binding protein NMC0691 from Neisseria meningitidis serogroup C / serotype 2a (strain ATCC 700532 / DSM 15464 / FAM18).